We begin with the raw amino-acid sequence, 301 residues long: LHMIHLHWYQYPPMNPIMYPLLLVFMLITGILCLAGNFVTIWVFMNTKSLRTPANLLVVNLAMSDFLMMFTMFPPMMITCYYHTWTLGATFCQVYAFLGNLCGCASIWTMVFITFDRYNVIVKGVAGEPLSTKKATLWILTIWILSTTWCVAPFFGWNRYVPEGNLTGCGTDYLSQDILSRSYLYIYSTWVYFLPLAITIYCYVVIIKAVAAHEKGMRDQAKKMGIKSLRNEEAQKTSAECRLAKIAMTTVALWFIAWTPYLLINWVGMFARSYLSPVYTIWGYVFAKANAVYNPIVYAIS.

Topologically, residues 1 to 18 (LHMIHLHWYQYPPMNPIM) are extracellular. A helical membrane pass occupies residues 19–43 (YPLLLVFMLITGILCLAGNFVTIWV). The Cytoplasmic segment spans residues 44-55 (FMNTKSLRTPAN). Residues 56–78 (LLVVNLAMSDFLMMFTMFPPMMI) traverse the membrane as a helical segment. At 79–92 (TCYYHTWTLGATFC) the chain is on the extracellular side. Cys-92 and Cys-169 are oxidised to a cystine. A helical membrane pass occupies residues 93–115 (QVYAFLGNLCGCASIWTMVFITF). A 'Ionic lock' involved in activated form stabilization motif is present at residues 116 to 118 (DRY). Residues 116 to 134 (DRYNVIVKGVAGEPLSTKK) are Cytoplasmic-facing. A helical transmembrane segment spans residues 135-155 (ATLWILTIWILSTTWCVAPFF). At 156–182 (GWNRYVPEGNLTGCGTDYLSQDILSRS) the chain is on the extracellular side. Asn-165 carries N-linked (GlcNAc...) asparagine glycosylation. The chain crosses the membrane as a helical span at residues 183 to 204 (YLYIYSTWVYFLPLAITIYCYV). Residues 205–245 (VIIKAVAAHEKGMRDQAKKMGIKSLRNEEAQKTSAECRLAK) lie on the Cytoplasmic side of the membrane. Residues 246 to 267 (IAMTTVALWFIAWTPYLLINWV) form a helical membrane-spanning segment. Topologically, residues 268–278 (GMFARSYLSPV) are extracellular. The chain crosses the membrane as a helical span at residues 279–300 (YTIWGYVFAKANAVYNPIVYAI). Lys-288 carries the N6-(retinylidene)lysine modification.

It belongs to the G-protein coupled receptor 1 family. Opsin subfamily. In terms of assembly, homodimer. Interacts with GNAQ. Post-translationally, contains one covalently linked retinal chromophore.

Its subcellular location is the cell projection. It localises to the rhabdomere membrane. Photoreceptor required for image-forming vision at low light intensity. Can use both retinal and 3-dehydroretinal as visual pigment. Light-induced isomerization of 11-cis to all-trans retinal triggers a conformational change that activates signaling via G-proteins. Signaling via GNAQ probably mediates the activation of phospholipase C. This Orconectes australis (Southern cave crayfish) protein is Rhodopsin (RHO).